Reading from the N-terminus, the 81-residue chain is MVVIRLARGGSKHRPFYNVIVTDSRSRRDGRFIERVGFYNPVANEKQERVRLNADRLNHWIAQGAQVSDSVAKLIKEQKAV.

Belongs to the bacterial ribosomal protein bS16 family.

The protein is Small ribosomal subunit protein bS16 of Neisseria gonorrhoeae (strain ATCC 700825 / FA 1090).